A 447-amino-acid chain; its full sequence is NADP-specific glutamate dehydrogenase (447 aa).

Substrate contacts are provided by Lys92, Gln113, and Lys116. Lys128 (proton donor) is an active-site residue. Residue Gly167 participates in substrate binding. 2 residues coordinate NADP(+): Thr211 and Asn242. Substrate is bound at residue Ser380.

The protein belongs to the Glu/Leu/Phe/Val dehydrogenases family. In terms of assembly, homohexamer.

It catalyses the reaction L-glutamate + NADP(+) + H2O = 2-oxoglutarate + NH4(+) + NADPH + H(+). Functionally, catalyzes the reversible oxidative deamination of glutamate to alpha-ketoglutarate and ammonia. This Salmonella typhimurium (strain LT2 / SGSC1412 / ATCC 700720) protein is NADP-specific glutamate dehydrogenase (gdhA).